Reading from the N-terminus, the 121-residue chain is Large ribosomal subunit protein bL12 (121 aa).

This sequence belongs to the bacterial ribosomal protein bL12 family. In terms of assembly, homodimer. Part of the ribosomal stalk of the 50S ribosomal subunit. Forms a multimeric L10(L12)X complex, where L10 forms an elongated spine to which 2 to 4 L12 dimers bind in a sequential fashion. Binds GTP-bound translation factors.

In terms of biological role, forms part of the ribosomal stalk which helps the ribosome interact with GTP-bound translation factors. Is thus essential for accurate translation. The protein is Large ribosomal subunit protein bL12 of Pelagibacter ubique (strain HTCC1062).